Consider the following 429-residue polypeptide: MIELDINASDKSLSHRAVIFSLLAQKPCVVRNFLMGEDCLSSLEIAQNLGAKVENTAKNSFKITPPTAIKEPSKILNCNNSGTSMRLYSGLLSAQKGLFVLSGDNSLNSRPMKRIIEPLKAFEARILGREDNHFAPLVIVGSPLKACNYESPIASAQVKSAFILSALQAQGSSTYKENELSRNHTEIMLKSLGADIQDQNGVLMVSPLEKPLEAFDFTIANDPSSAFFFALACAITPKSRLLLKNVLLNPTRIGAFEALKKMGASIEYAIQSKNLEMIGDIYIEHAPLKAINIEQNIASLIDEIPALSIAMLFAKGKSMVRNAKDLRAKESDRIKAVVSNFKALGIECEEFEDGFYVEGLEDISPLKQRFSQKKPPLIKSFNDHRIAMSFAVLTLALPLEIDNLECANISFPQFKRLLNLFKKGSLNGN.

3-phosphoshikimate-binding residues include K11, S12, and R16. K11 is a phosphoenolpyruvate binding site. 2 residues coordinate phosphoenolpyruvate: G82 and R110. S155, Q157, D302, and K329 together coordinate 3-phosphoshikimate. Q157 lines the phosphoenolpyruvate pocket. D302 functions as the Proton acceptor in the catalytic mechanism. Residues R333 and R385 each contribute to the phosphoenolpyruvate site.

Belongs to the EPSP synthase family. Monomer.

It localises to the cytoplasm. It carries out the reaction 3-phosphoshikimate + phosphoenolpyruvate = 5-O-(1-carboxyvinyl)-3-phosphoshikimate + phosphate. The protein operates within metabolic intermediate biosynthesis; chorismate biosynthesis; chorismate from D-erythrose 4-phosphate and phosphoenolpyruvate: step 6/7. Catalyzes the transfer of the enolpyruvyl moiety of phosphoenolpyruvate (PEP) to the 5-hydroxyl of shikimate-3-phosphate (S3P) to produce enolpyruvyl shikimate-3-phosphate and inorganic phosphate. The chain is 3-phosphoshikimate 1-carboxyvinyltransferase from Helicobacter pylori (strain P12).